Consider the following 581-residue polypeptide: Arginine--tRNA ligase (581 aa).

The 'HIGH' region motif lies at 126 to 136 (PNLAKEMHVGH).

Belongs to the class-I aminoacyl-tRNA synthetase family. As to quaternary structure, monomer.

It localises to the cytoplasm. It carries out the reaction tRNA(Arg) + L-arginine + ATP = L-arginyl-tRNA(Arg) + AMP + diphosphate. This is Arginine--tRNA ligase from Shewanella amazonensis (strain ATCC BAA-1098 / SB2B).